A 745-amino-acid polypeptide reads, in one-letter code: Ankyrin repeat and protein kinase domain-containing protein 1 (745 aa).

In terms of domain architecture, Protein kinase spans 34 to 301 (EEEWHLVASG…NVAVETDMLL (268 aa)). Residues 40–48 (VASGGFSKV) and lysine 63 each bind ATP. Residue aspartate 157 is the Proton acceptor of the active site. 11 ANK repeats span residues 369–398 (NRVT…DVDC), 402–431 (SGYT…DTNL), 435–464 (DGWA…LVNA), 468–497 (EGWT…DLSP), 501–530 (EGKT…ELDA), 534–563 (NLRT…LPDA), 567–596 (SGYS…SLEL), 600–629 (QGWT…DLDA), 633–662 (MQWT…NPNA), 666–695 (SGWT…DIHA), and 699–728 (VGWT…QVDV).

Belongs to the protein kinase superfamily. TKL Ser/Thr protein kinase family.

It catalyses the reaction L-seryl-[protein] + ATP = O-phospho-L-seryl-[protein] + ADP + H(+). The enzyme catalyses L-threonyl-[protein] + ATP = O-phospho-L-threonyl-[protein] + ADP + H(+). The protein is Ankyrin repeat and protein kinase domain-containing protein 1 (Ankk1) of Mus musculus (Mouse).